The chain runs to 499 residues: MTQTLHALLKAVGLPVPAGVANATVTALTCDSRCVGQGSLFIGLPGERVDGGSFWPAALASGAAAVLIGEQAAAAHPPAPGDSVLVVPDPVAFWAGELASAFWQRPSMRMELIGVTGTNGKTTTTHLIEHLSQACGRPAALFGTLVNRWPGHSLTATHTTAAADRLQAQLAEALEGGTQVAAMEVSSHALDQQRVAGCRFSGAVFTNLTQDHLDYHPSMEAYFEAKALLFASPYLVGEGPRAVVNVDDPWGRQLADRLGERAWRCSLAHEADLTMADLRMTSNGVDGALRTPLGEGRFHSPLVGRFNLMNVLQAVGALLQQGLPLPLLLNALPSFRGVPGRMERIVLTGSAAEDHPAVLVDYAHTPDGLRNALEACRPFVRGQLICVFGCGGDRDRGKRPQMAAIAAALADQVVVTSDNPRTEDPGQILDDVVAGLPADAERQVEVDRAKAIALAIAQARCGDLVLIAGKGHEDYQILGTEKVHFDDREQAEQALRHWR.

Ser32 is a UDP-N-acetyl-alpha-D-muramoyl-L-alanyl-D-glutamate binding site. 117–123 (GTNGKTT) contacts ATP. UDP-N-acetyl-alpha-D-muramoyl-L-alanyl-D-glutamate-binding positions include 159-160 (TT), Ser186, Gln192, and Arg194. Lys226 is subject to N6-carboxylysine. Meso-2,6-diaminopimelate contacts are provided by residues Arg394, 418 to 421 (DNPR), Gly469, and Glu473. The Meso-diaminopimelate recognition motif signature appears at 418–421 (DNPR).

The protein belongs to the MurCDEF family. MurE subfamily. Mg(2+) serves as cofactor. Carboxylation is probably crucial for Mg(2+) binding and, consequently, for the gamma-phosphate positioning of ATP.

It localises to the cytoplasm. The enzyme catalyses UDP-N-acetyl-alpha-D-muramoyl-L-alanyl-D-glutamate + meso-2,6-diaminopimelate + ATP = UDP-N-acetyl-alpha-D-muramoyl-L-alanyl-gamma-D-glutamyl-meso-2,6-diaminopimelate + ADP + phosphate + H(+). It functions in the pathway cell wall biogenesis; peptidoglycan biosynthesis. Its function is as follows. Catalyzes the addition of meso-diaminopimelic acid to the nucleotide precursor UDP-N-acetylmuramoyl-L-alanyl-D-glutamate (UMAG) in the biosynthesis of bacterial cell-wall peptidoglycan. The protein is UDP-N-acetylmuramoyl-L-alanyl-D-glutamate--2,6-diaminopimelate ligase of Synechococcus sp. (strain WH7803).